Consider the following 109-residue polypeptide: Large ribosomal subunit protein uL23 (109 aa).

This sequence belongs to the universal ribosomal protein uL23 family. Part of the 50S ribosomal subunit. Contacts protein L29, and trigger factor when it is bound to the ribosome.

Its function is as follows. One of the early assembly proteins it binds 23S rRNA. One of the proteins that surrounds the polypeptide exit tunnel on the outside of the ribosome. Forms the main docking site for trigger factor binding to the ribosome. This chain is Large ribosomal subunit protein uL23, found in Haemophilus influenzae (strain PittEE).